Here is a 347-residue protein sequence, read N- to C-terminus: N-acetyl-gamma-glutamyl-phosphate reductase (347 aa).

Residue C152 is part of the active site.

It belongs to the NAGSA dehydrogenase family. Type 1 subfamily.

The protein localises to the cytoplasm. The catalysed reaction is N-acetyl-L-glutamate 5-semialdehyde + phosphate + NADP(+) = N-acetyl-L-glutamyl 5-phosphate + NADPH + H(+). Its pathway is amino-acid biosynthesis; L-arginine biosynthesis; N(2)-acetyl-L-ornithine from L-glutamate: step 3/4. Catalyzes the NADPH-dependent reduction of N-acetyl-5-glutamyl phosphate to yield N-acetyl-L-glutamate 5-semialdehyde. The chain is N-acetyl-gamma-glutamyl-phosphate reductase from Neisseria meningitidis serogroup A / serotype 4A (strain DSM 15465 / Z2491).